The sequence spans 599 residues: Putative ATP-dependent helicase YeeB (599 aa).

Residues 30–207 (AFEKRNSQYL…LLPEDEELFD (178 aa)) enclose the Helicase ATP-binding domain. 43–50 (APPASGKS) provides a ligand contact to ATP. The DEAH box signature appears at 154-157 (DEFH). Residues 236-408 (QYTSAINEVL…TVNTMLKAIS (173 aa)) form the Helicase C-terminal domain.

The protein belongs to the helicase family.

The protein is Putative ATP-dependent helicase YeeB (yeeB) of Bacillus subtilis (strain 168).